A 293-amino-acid polypeptide reads, in one-letter code: Elongation factor Ts (293 aa).

The involved in Mg(2+) ion dislocation from EF-Tu stretch occupies residues 80-83 (TDFV).

It belongs to the EF-Ts family.

The protein localises to the cytoplasm. In terms of biological role, associates with the EF-Tu.GDP complex and induces the exchange of GDP to GTP. It remains bound to the aminoacyl-tRNA.EF-Tu.GTP complex up to the GTP hydrolysis stage on the ribosome. This is Elongation factor Ts from Paraburkholderia xenovorans (strain LB400).